The chain runs to 930 residues: SCY1-like protein 2 (930 aa).

Positions 32–327 constitute a Protein kinase domain; that stretch reads FDVGRHIASG…ADQMTKIPFF (296 aa). An HEAT repeat occupies 443–479; the sequence is DEIKNSVLPMVYRALEAPSIQIQELCLNIIPTFANLI. Residues Ser-658 and Ser-677 each carry the phosphoserine modification. The disordered stretch occupies residues 658–706; it reads SGSESENREDGMQGKQKRGSLTLEEKQKLAKEQEQAQKLKSQQPLKPQV. Residues 680–694 are compositionally biased toward basic and acidic residues; that stretch reads LEEKQKLAKEQEQAQ. Positions 695–705 are enriched in low complexity; it reads KLKSQQPLKPQ. Residue Thr-708 is modified to Phosphothreonine. Positions 895 to 930 are disordered; it reads GMQGNPFFNPQNFAQPPPTTMTSSSSASNDLKDLFG. Residues 897-922 are compositionally biased toward low complexity; sequence QGNPFFNPQNFAQPPPTTMTSSSSAS.

Belongs to the protein kinase superfamily. Interacts with clathrin and AP2B1; the interaction mediates the association with the AP-2 complex. Post-translationally, could autophosphorylate in presence of poly-L-lysine. In terms of tissue distribution, ubiquitously expressed.

It is found in the cytoplasmic vesicle. Its subcellular location is the clathrin-coated vesicle. It localises to the golgi apparatus. The protein localises to the trans-Golgi network membrane. The protein resides in the endosome membrane. Functionally, component of the AP2-containing clathrin coat that may regulate clathrin-dependent trafficking at plasma membrane, TGN and endosomal system. A possible serine/threonine-protein kinase toward the beta2-subunit of the plasma membrane adapter complex AP2 and other proteins in presence of poly-L-lysine has not been confirmed. By regulating the expression of excitatory receptors at synapses, plays an essential role in neuronal function and signaling and in brain development. The polypeptide is SCY1-like protein 2 (Mus musculus (Mouse)).